A 131-amino-acid polypeptide reads, in one-letter code: Large ribosomal subunit protein uL14m (131 aa).

The protein belongs to the universal ribosomal protein uL14 family. In terms of assembly, component of the mitochondrial large ribosomal subunit (mt-LSU). Mature N.crassa 74S mitochondrial ribosomes consist of a small (37S) and a large (54S) subunit. The 37S small subunit contains a 16S ribosomal RNA (16S mt-rRNA) and 32 different proteins. The 54S large subunit contains a 23S rRNA (23S mt-rRNA) and 42 different proteins.

The protein localises to the mitochondrion. Functionally, component of the mitochondrial ribosome (mitoribosome), a dedicated translation machinery responsible for the synthesis of mitochondrial genome-encoded proteins, including at least some of the essential transmembrane subunits of the mitochondrial respiratory chain. The mitoribosomes are attached to the mitochondrial inner membrane and translation products are cotranslationally integrated into the membrane. The sequence is that of Large ribosomal subunit protein uL14m (mrpl38) from Neurospora crassa (strain ATCC 24698 / 74-OR23-1A / CBS 708.71 / DSM 1257 / FGSC 987).